A 354-amino-acid chain; its full sequence is UPF0283 protein YcjF (354 aa).

Transmembrane regions (helical) follow at residues 71–91 (MVTV…VQWV), 101–121 (IALG…GSVV), and 214–234 (ESAL…FIAW).

The protein belongs to the UPF0283 family.

Its subcellular location is the cell inner membrane. This Yersinia enterocolitica protein is UPF0283 protein YcjF (ycjF).